Here is an 84-residue protein sequence, read N- to C-terminus: Small ribosomal subunit protein bS18B (84 aa).

Positions methionine 1–lysine 10 are enriched in basic residues. The segment at methionine 1 to lysine 20 is disordered.

Belongs to the bacterial ribosomal protein bS18 family. Part of the 30S ribosomal subunit. Forms a tight heterodimer with protein bS6.

Functionally, binds as a heterodimer with protein bS6 to the central domain of the 16S rRNA, where it helps stabilize the platform of the 30S subunit. The polypeptide is Small ribosomal subunit protein bS18B (Nocardia farcinica (strain IFM 10152)).